Consider the following 512-residue polypeptide: Citrate synthase (512 aa).

Active-site residues include histidine 288, histidine 327, and aspartate 383. The interval 483-512 (AIPKTATGSKSQLSASIEQSFGEKISPQSH) is disordered. The span at 488–501 (ATGSKSQLSASIEQ) shows a compositional bias: polar residues.

The protein belongs to the citrate synthase family.

Its subcellular location is the cytoplasm. It catalyses the reaction oxaloacetate + acetyl-CoA + H2O = citrate + CoA + H(+). It functions in the pathway carbohydrate metabolism; tricarboxylic acid cycle; isocitrate from oxaloacetate: step 1/2. The sequence is that of Citrate synthase (gltA) from Dictyostelium discoideum (Social amoeba).